An 87-amino-acid chain; its full sequence is MAHKKAGGSSRNGRDSQGQRRGVKRFGGQLVLAGNILIRQLGTKVHPGENVGMGRDYTLFAKVDGTVRYEKFTRKRKVLTRVHIDAV.

Residues 1–22 (MAHKKAGGSSRNGRDSQGQRRG) form a disordered region.

The protein belongs to the bacterial ribosomal protein bL27 family.

The polypeptide is Large ribosomal subunit protein bL27 (Nitratidesulfovibrio vulgaris (strain DP4) (Desulfovibrio vulgaris)).